Consider the following 756-residue polypeptide: Xylosyl- and glucuronyltransferase LARGE1 (756 aa).

At 1-10 the chain is on the cytoplasmic side; it reads MLGICRGRRK. The helical; Signal-anchor for type II membrane protein transmembrane segment at 11–31 threads the bilayer; it reads FLAASLSLLCIPAITWIYLFS. Over 32–756 the chain is Lumenal; it reads GSFEDGKPVS…LKYLTAENNS (725 aa). Disordered regions lie at residues 43–69 and 81–109; these read SPLE…EVRM and RQLS…EGTG. Positions 44–58 are enriched in polar residues; it reads PLESQAHSPRYTASS. Residues 53 to 95 are a coiled coil; the sequence is RYTASSQRERESLEVRMREVEEENRALRRQLSLAQGRAPSHRR. Over residues 59 to 69 the composition is skewed to basic and acidic residues; it reads QRERESLEVRM. Residues asparagine 97, asparagine 122, and asparagine 148 are each glycosylated (N-linked (GlcNAc...) asparagine). The xylosyltransferase activity stretch occupies residues 138-413; the sequence is IHVAIVCAGY…FLEYDGNLLR (276 aa). Mn(2+)-binding residues include aspartate 242 and aspartate 244. An N-linked (GlcNAc...) asparagine glycan is attached at asparagine 272. The segment at 414–756 is glucuronyltransferase activity; it reads RELFGCPSEA…LKYLTAENNS (343 aa). Residues aspartate 563 and aspartate 565 each coordinate Mn(2+).

The protein in the C-terminal section; belongs to the glycosyltransferase 49 family. In the N-terminal section; belongs to the glycosyltransferase 8 family. Interacts with DAG1 (via the N-terminal domain of alpha-DAG1); the interaction increases binding of DAG1 to laminin. Interacts with B4GAT1. The cofactor is Mn(2+). Ubiquitous. Highest expression in heart, brain and skeletal muscle.

It localises to the golgi apparatus membrane. The catalysed reaction is 3-O-[beta-D-GlcA-(1-&gt;3)-beta-D-Xyl-(1-&gt;4)-Rib-ol-P-Rib-ol-P-3-beta-D-GalNAc-(1-&gt;3)-beta-D-GlcNAc-(1-&gt;4)-(O-6-P-alpha-D-Man)]-Thr-[protein] + UDP-alpha-D-xylose = 3-O-[alpha-D-Xyl-(1-&gt;3)-beta-D-GlcA-(1-&gt;4)-beta-D-Xyl-(1-&gt;4)-Rib-ol-P-Rib-ol-P-3-beta-D-GalNAc-(1-&gt;3)-beta-D-GlcNAc-(1-&gt;4)-(O-6-P-alpha-D-Man)]-Thr-[protein] + UDP + H(+). It carries out the reaction 3-O-{(1-&gt;[3)-alpha-D-Xyl-(1-&gt;3)-beta-D-GlcA-(1-&gt;](n)-4)-beta-D-Xyl-(1-&gt;4)-Rib-ol-P-Rib-ol-P-3-beta-D-GalNAc-(1-&gt;3)-beta-D-GlcNAc-(1-&gt;4)-O-6-P-alpha-D-Man}-L-Thr-[protein] + UDP-alpha-D-glucuronate = 3-O-{beta-D-GlcA-(1-&gt;[3)-alpha-D-Xyl-(1-&gt;3)-beta-D-GlcA-(1-&gt;](n)-4)-beta-D-Xyl-(1-&gt;4)-Rib-ol-P-Rib-ol-P-3-beta-D-GalNAc-(1-&gt;3)-beta-D-GlcNAc-(1-&gt;4)-O-6-P-alpha-D-Man}-L-Thr-[protein] + UDP + H(+). It catalyses the reaction 3-O-{beta-D-GlcA-(1-&gt;[3)-alpha-D-Xyl-(1-&gt;3)-beta-D-GlcA-(1-&gt;](n)-4)-beta-D-Xyl-(1-&gt;4)-Rib-ol-P-Rib-ol-P-3-beta-D-GalNAc-(1-&gt;3)-beta-D-GlcNAc-(1-&gt;4)-O-6-P-alpha-D-Man}-L-Thr-[protein] + UDP-alpha-D-xylose = 3-O-{(1-&gt;[3)-alpha-D-Xyl-(1-&gt;3)-beta-D-GlcA-(1-&gt;](n+1)-4)-beta-D-Xyl-(1-&gt;4)-Rib-ol-P-Rib-ol-P-3-beta-D-GalNAc-(1-&gt;3)-beta-D-GlcNAc-(1-&gt;4)-O-6-P-alpha-D-Man}-L-Thr-[protein] + UDP + H(+). It participates in protein modification; protein glycosylation. Functionally, bifunctional glycosyltransferase with both alpha-1,3-xylosyltransferase and beta-1,3-glucuronyltransferase activities involved in the maturation of alpha-dystroglycan (DAG1) by glycosylation leading to DAG1 binding to laminin G-like domain-containing extracellular proteins with high affinity. Elongates the glucuronyl-beta-1,4-xylose-beta disaccharide primer structure initiated by B4GAT1 by adding repeating units [-3-Xylose-alpha-1,3-GlcA-beta-1-] to produce a heteropolysaccharide. Requires the phosphorylation of core M3 (O-mannosyl trisaccharide) by POMK to elongate the glucuronyl-beta-1,4-xylose-beta disaccharide primer. Plays a key role in skeletal muscle function and regeneration. This is Xylosyl- and glucuronyltransferase LARGE1 from Homo sapiens (Human).